Here is a 249-residue protein sequence, read N- to C-terminus: Homeobox protein TGIF2LX (249 aa).

Disordered stretches follow at residues 1–65 (MEAA…GYSP) and 126–199 (DPIV…PKKK). The segment covering 9-27 (AETRSRVEKDSRRAIKDSP) has biased composition (basic and acidic residues). Over residues 28–46 (AKTQSPAQDTSIMLRNNAD) the composition is skewed to polar residues. Positions 55 to 118 (EHKKKRKGYS…INARRRILPD (64 aa)) form a DNA-binding region, homeobox; TALE-type. Over residues 159 to 172 (DNVQSLPLRSSPKG) the composition is skewed to polar residues.

This sequence belongs to the TALE/TGIF homeobox family.

Its subcellular location is the nucleus. Its function is as follows. May have a transcription role in testis. In Macaca mulatta (Rhesus macaque), this protein is Homeobox protein TGIF2LX (TGIF2LX).